Consider the following 2036-residue polypeptide: Bikaverin polyketide synthase bik1 (2036 aa).

Residues 8–242 are N-terminal acylcarrier protein transacylase domain (SAT); the sequence is YVFGDQSTPV…YPAPIYGPYH (235 aa). A Ketosynthase family 3 (KS3) domain is found at 370–801; the sequence is ENKIAIIGFS…GGNTSLLLED (432 aa). Catalysis depends on for beta-ketoacyl synthase activity residues C541, H676, and H718. Residues 908-1209 are acyl/malonyl transferases; sequence FLFTGQGAQE…LASLRRKEDH (302 aa). S997 functions as the For acyl/malonyl transferase activity in the catalytic mechanism. The tract at residues 1293–1425 is N-terminal hotdog fold; sequence HNVIEQVHGD…CDVAVENPSS (133 aa). A PKS/mFAS DH domain is found at 1293–1600; it reads HNVIEQVHGD…FKKVARKVLE (308 aa). The product template (PT) domain stretch occupies residues 1295 to 1599; the sequence is VIEQVHGDKR…TFKKVARKVL (305 aa). Residue H1325 is the Proton acceptor; for dehydratase activity of the active site. The segment at 1452-1600 is C-terminal hotdog fold; sequence SAHMMRRGLL…FKKVARKVLE (149 aa). The active-site Proton donor; for dehydratase activity is the D1511. The tract at residues 1628–1654 is disordered; sequence VLTPPSTTSHSVGTTSPPEPTESPVGS. Residues 1638 to 1654 show a composition bias toward low complexity; the sequence is SVGTTSPPEPTESPVGS. In terms of domain architecture, Carrier spans 1653 to 1730; sequence GSASGLIQKA…DLKSFLGAND (78 aa). The residue at position 1690 (S1690) is an O-(pantetheine 4'-phosphoryl)serine. The interval 1733–1758 is disordered; sequence FSSSNSEAESSASSAASTSPSDHGDD. The segment covering 1734–1753 has biased composition (low complexity); the sequence is SSSNSEAESSASSAASTSPS. The active-site For thioesterase activity is the S1857.

The protein operates within secondary metabolite biosynthesis. In terms of biological role, polyketide synthase; part of the gene cluster that mediates the biosynthesis of bikaverin, a red pigment also considered as a mycotoxin. The first stage is catalyzed by the polyketide synthase bik1, which catalyzes the formation of the intermediate SMA76a also knowm as pre-bikaverin. FAD-dependent monooxygenase bik2 might then be responsible for the oxidation of pre-bikaverin to oxo-pre-bikaverin which is in turn methylated by the O-methyltransferase bik3 to me-oxo-pre-bikaverin. A further cycle of oxydation and methylation by bik2 and bik3 leads to the final product of bikaverin, via a nor-bikaverin intermediate. This chain is Bikaverin polyketide synthase bik1, found in Gibberella fujikuroi (strain CBS 195.34 / IMI 58289 / NRRL A-6831) (Bakanae and foot rot disease fungus).